The chain runs to 1354 residues: Rho-associated protein kinase 1 (1354 aa).

N-acetylserine is present on serine 2. The Protein kinase domain maps to 76 to 338 (YEVVKVIGRG…VEEIKRHLFF (263 aa)). Residues 82–90 (IGRGAFGEV) and lysine 105 contribute to the ATP site. Aspartate 198 acts as the Proton acceptor in catalysis. Residues 341-409 (DQWAWETLRD…YSNRRYLSSA (69 aa)) form the AGC-kinase C-terminal domain. The interaction with FHOD1 stretch occupies residues 368–727 (FDDLEEDKGE…KKLKEEREAR (360 aa)). Residues 422–692 (KSLQESLQKT…RLEQEVNEHK (271 aa)) adopt a coiled-coil conformation. One can recognise an REM-1 domain in the interval 479-556 (STVSQIEKEK…LEEANDLLRT (78 aa)). Residue lysine 647 is modified to N6-acetyllysine. Residues 707–946 (EAKSVAMCEM…TVSRLEEANS (240 aa)) form an SHROOM3 binding region. The 67-residue stretch at 949-1015 (TKDIEILRRE…LAEIMNRKDF (67 aa)) folds into the RhoBD domain. Residues 998 to 1010 (LKTQAVNKLAEIM) form an RHOA binding region. A coiled-coil region spans residues 1011–1102 (NRKDFKIDRK…KLLDLSDSTS (92 aa)). Phosphoserine is present on residues serine 1105 and serine 1108. The interval 1115-1354 (NLPESRIEGW…VVKNTSGKTS (240 aa)) is auto-inhibitory. One can recognise a PH domain in the interval 1118 to 1317 (ESRIEGWLSV…WVTHLVKKIP (200 aa)). Residues 1228–1281 (GHEFIPTLYHFPANCDACAKPLWHVFKPPPALECRRCHVKCHRDHLDKKEDLIC) form a Phorbol-ester/DAG-type zinc finger. A disordered region spans residues 1320 to 1354 (PPSGFVRASPRTLSTRSTANQSFRKVVKNTSGKTS). A Phosphoserine modification is found at serine 1328. The span at 1330 to 1354 (RTLSTRSTANQSFRKVVKNTSGKTS) shows a compositional bias: polar residues.

It belongs to the protein kinase superfamily. AGC Ser/Thr protein kinase family. As to quaternary structure, homodimer. Interacts with RHOB, RHOC, MYLC2B and PTEN. Interacts with ITGB1BP1 (via N-terminus and PTB domain). Interacts with RHOA (activated by GTP), CHORDC1, DAPK3, GEM, JIP3, RHOE, PPP1R12A, PFN1, LIMK1, LIMK2 and TSG101. Interacts with FHOD1 in a Src-dependent manner. Interacts with SHROOM3. Requires Mg(2+) as cofactor. In terms of processing, autophosphorylated on serine and threonine residues. Cleaved by caspase-3 during apoptosis. This leads to constitutive activation of the kinase and membrane blebbing. As to expression, detected in blood platelets.

The protein localises to the cytoplasm. The protein resides in the cytoskeleton. It localises to the microtubule organizing center. Its subcellular location is the centrosome. It is found in the centriole. The protein localises to the golgi apparatus membrane. The protein resides in the cell projection. It localises to the bleb. Its subcellular location is the cell membrane. It is found in the lamellipodium. The protein localises to the ruffle. It catalyses the reaction L-seryl-[protein] + ATP = O-phospho-L-seryl-[protein] + ADP + H(+). It carries out the reaction L-threonyl-[protein] + ATP = O-phospho-L-threonyl-[protein] + ADP + H(+). Activated by RHOA binding. Inhibited by Y-27632. Protein kinase which is a key regulator of the actin cytoskeleton and cell polarity. Involved in regulation of smooth muscle contraction, actin cytoskeleton organization, stress fiber and focal adhesion formation, neurite retraction, cell adhesion and motility via phosphorylation of DAPK3, GFAP, LIMK1, LIMK2, MYL9/MLC2, TPPP, PFN1 and PPP1R12A. Phosphorylates FHOD1 and acts synergistically with it to promote SRC-dependent non-apoptotic plasma membrane blebbing. Phosphorylates JIP3 and regulates the recruitment of JNK to JIP3 upon UVB-induced stress. Acts as a suppressor of inflammatory cell migration by regulating PTEN phosphorylation and stability. Acts as a negative regulator of VEGF-induced angiogenic endothelial cell activation. Required for centrosome positioning and centrosome-dependent exit from mitosis. Plays a role in terminal erythroid differentiation. Inhibits podocyte motility via regulation of actin cytoskeletal dynamics and phosphorylation of CFL1. Promotes keratinocyte terminal differentiation. Involved in osteoblast compaction through the fibronectin fibrillogenesis cell-mediated matrix assembly process, essential for osteoblast mineralization. May regulate closure of the eyelids and ventral body wall by inducing the assembly of actomyosin bundles. The chain is Rho-associated protein kinase 1 (ROCK1) from Homo sapiens (Human).